A 103-amino-acid polypeptide reads, in one-letter code: uncharacterized protein (103 aa).

This is an uncharacterized protein from Mycoplasma pneumoniae (strain ATCC 29342 / M129 / Subtype 1) (Mycoplasmoides pneumoniae).